Here is a 217-residue protein sequence, read N- to C-terminus: Adenylate kinase (217 aa).

ATP is bound at residue 11–16 (GAGKGT). The segment at 31 to 60 (STGDMFREAMANKTPVGLEAKSYIDKGDLV) is NMP. Residues Thr32, Arg37, 58-60 (DLV), 86-89 (GFPR), and Gln93 each bind AMP. Residues 127–165 (ARFMCKNCGATYNKFSKKPKVEGTCDRCGGHEFYQREDD) form an LID region. Residue Arg128 participates in ATP binding. Positions 131 and 134 each coordinate Zn(2+). 137-138 (TY) contacts ATP. Zn(2+) contacts are provided by Cys151 and Cys154. Positions 162 and 173 each coordinate AMP. Gln201 serves as a coordination point for ATP.

The protein belongs to the adenylate kinase family. As to quaternary structure, monomer.

It is found in the cytoplasm. It catalyses the reaction AMP + ATP = 2 ADP. Its pathway is purine metabolism; AMP biosynthesis via salvage pathway; AMP from ADP: step 1/1. Functionally, catalyzes the reversible transfer of the terminal phosphate group between ATP and AMP. Plays an important role in cellular energy homeostasis and in adenine nucleotide metabolism. The sequence is that of Adenylate kinase from Lactobacillus delbrueckii subsp. bulgaricus (strain ATCC 11842 / DSM 20081 / BCRC 10696 / JCM 1002 / NBRC 13953 / NCIMB 11778 / NCTC 12712 / WDCM 00102 / Lb 14).